The primary structure comprises 315 residues: Homoserine kinase (315 aa).

97 to 107 (PPARGLGSSAT) lines the ATP pocket.

This sequence belongs to the GHMP kinase family. Homoserine kinase subfamily.

Its subcellular location is the cytoplasm. It catalyses the reaction L-homoserine + ATP = O-phospho-L-homoserine + ADP + H(+). The protein operates within amino-acid biosynthesis; L-threonine biosynthesis; L-threonine from L-aspartate: step 4/5. Catalyzes the ATP-dependent phosphorylation of L-homoserine to L-homoserine phosphate. The sequence is that of Homoserine kinase from Prochlorococcus marinus (strain MIT 9301).